The sequence spans 104 residues: Inclusion membrane protein F (104 aa).

2 helical membrane-spanning segments follow: residues 39 to 59 (LVVA…SLVA) and 70 to 90 (LAVL…VLFI).

The protein resides in the secreted. It is found in the host vacuole. It localises to the host pathogen-containing vacuole. The protein localises to the host pathogen-containing vacuole membrane. Functionally, inclusion membrane protein probably involved in early modification events of the chlamydial inclusion. The protein is Inclusion membrane protein F (incF) of Chlamydia trachomatis serovar D (strain ATCC VR-885 / DSM 19411 / UW-3/Cx).